The chain runs to 94 residues: Integration host factor subunit beta (94 aa).

The protein belongs to the bacterial histone-like protein family. As to quaternary structure, heterodimer of an alpha and a beta chain.

In terms of biological role, this protein is one of the two subunits of integration host factor, a specific DNA-binding protein that functions in genetic recombination as well as in transcriptional and translational control. The protein is Integration host factor subunit beta of Vibrio campbellii (strain ATCC BAA-1116).